The primary structure comprises 246 residues: NADH-quinone oxidoreductase subunit C (246 aa).

This sequence belongs to the complex I 30 kDa subunit family. In terms of assembly, NDH-1 is composed of 14 different subunits. Subunits NuoB, C, D, E, F, and G constitute the peripheral sector of the complex.

The protein localises to the cell inner membrane. It catalyses the reaction a quinone + NADH + 5 H(+)(in) = a quinol + NAD(+) + 4 H(+)(out). Its function is as follows. NDH-1 shuttles electrons from NADH, via FMN and iron-sulfur (Fe-S) centers, to quinones in the respiratory chain. The immediate electron acceptor for the enzyme in this species is believed to be ubiquinone. Couples the redox reaction to proton translocation (for every two electrons transferred, four hydrogen ions are translocated across the cytoplasmic membrane), and thus conserves the redox energy in a proton gradient. In Halorhodospira halophila (strain DSM 244 / SL1) (Ectothiorhodospira halophila (strain DSM 244 / SL1)), this protein is NADH-quinone oxidoreductase subunit C.